Reading from the N-terminus, the 229-residue chain is 2,3-bisphosphoglycerate-dependent phosphoglycerate mutase (229 aa).

Substrate is bound by residues 7-14 (RHGQSEWN), 20-21 (TG), Arg-59, 86-89 (ERHY), Lys-97, 113-114 (RR), and 182-183 (GN). His-8 functions as the Tele-phosphohistidine intermediate in the catalytic mechanism. Residue Glu-86 is the Proton donor/acceptor of the active site.

Belongs to the phosphoglycerate mutase family. BPG-dependent PGAM subfamily.

The enzyme catalyses (2R)-2-phosphoglycerate = (2R)-3-phosphoglycerate. It participates in carbohydrate degradation; glycolysis; pyruvate from D-glyceraldehyde 3-phosphate: step 3/5. Its function is as follows. Catalyzes the interconversion of 2-phosphoglycerate and 3-phosphoglycerate. This Listeria monocytogenes serotype 4a (strain HCC23) protein is 2,3-bisphosphoglycerate-dependent phosphoglycerate mutase.